The following is a 395-amino-acid chain: MSEGITDIEESQIQTNYDKVVYKFDDMELDENLLRGVFGYGFEEPSAIQQRAIMPIIEGHDVLAQAQSGTGKTGTFSIAALQRIDTSVKAPQALMLAPTRELALQIQKVVMALAFHMDIKVHACIGGTSFVEDAEGLRDAQIVVGTPGRVFDNIQRRRFRTDKIKMFILDEADEMLSSGFKEQIYQIFTLLPPTTQVVLLSATMPNDVLEVTTKFMRNPVRILVKKDELTLEGIKQFYVNVEEEEYKYECLTDLYDSISVTQAVIFCNTRRKVEELTTKLRNDKFTVSAIYSDLPQQERDTIMKEFRSGSSRILISTDLLARGIDVQQVSLVINYDLPANKENYIHRIGRGGRFGRKGVAINFVTNEDVGAMRELEKFYSTQIEELPSDIATLLN.

Serine 2 is subject to N-acetylserine. The Q motif motif lies at tyrosine 22–glutamine 50. The Helicase ATP-binding domain occupies isoleucine 53 to isoleucine 222. An ATP-binding site is contributed by alanine 66–threonine 73. Threonine 73 carries the phosphothreonine modification. 2 positions are modified to phosphoserine: serine 77 and serine 129. At threonine 146 the chain carries Phosphothreonine. Positions aspartate 170–aspartate 173 match the DEAD box motif. In terms of domain architecture, Helicase C-terminal spans glycine 233–leucine 394.

Belongs to the DEAD box helicase family. eIF4A subfamily. In terms of assembly, component of the eIF4F complex, which composition varies with external and internal environmental conditions. It is composed of at least eIF4A, eIF4E and eIF4G.

The protein resides in the cytoplasm. It carries out the reaction ATP + H2O = ADP + phosphate + H(+). ATP-dependent RNA helicase which is a subunit of the eIF4F complex involved in cap recognition and is required for mRNA binding to ribosome. In the current model of translation initiation, eIF4A unwinds RNA secondary structures in the 5'-UTR of mRNAs which is necessary to allow efficient binding of the small ribosomal subunit, and subsequent scanning for the initiator codon. This is ATP-dependent RNA helicase eIF4A (TIF1) from Saccharomyces cerevisiae (strain YJM789) (Baker's yeast).